The primary structure comprises 154 residues: Small ribosomal subunit protein bS18 (154 aa).

The segment at 1-82 (MEKKTTKKAT…PFAKYNRGYP (82 aa)) is disordered. A compositionally biased stretch (low complexity) spans 8-19 (KATASKTTTTKK). Residues 20-32 (AAAEKTEIKETKK) show a composition bias toward basic and acidic residues. Low complexity predominate over residues 33–49 (TTTTKTSTAKKATTASV). Residues 50-69 (EKTEVKETKKSSDNKKEFNP) show a composition bias toward basic and acidic residues.

It belongs to the bacterial ribosomal protein bS18 family. Part of the 30S ribosomal subunit. Forms a tight heterodimer with protein bS6.

Functionally, binds as a heterodimer with protein bS6 to the central domain of the 16S rRNA, where it helps stabilize the platform of the 30S subunit. The sequence is that of Small ribosomal subunit protein bS18 from Malacoplasma penetrans (strain HF-2) (Mycoplasma penetrans).